Consider the following 642-residue polypeptide: Threonine--tRNA ligase (642 aa).

One can recognise a TGS domain in the interval Met-1–Thr-61. A catalytic region spans residues Asp-243–Pro-534. Positions 334, 385, and 511 each coordinate Zn(2+).

The protein belongs to the class-II aminoacyl-tRNA synthetase family. In terms of assembly, homodimer. Zn(2+) serves as cofactor.

It localises to the cytoplasm. It carries out the reaction tRNA(Thr) + L-threonine + ATP = L-threonyl-tRNA(Thr) + AMP + diphosphate + H(+). In terms of biological role, catalyzes the attachment of threonine to tRNA(Thr) in a two-step reaction: L-threonine is first activated by ATP to form Thr-AMP and then transferred to the acceptor end of tRNA(Thr). Also edits incorrectly charged L-seryl-tRNA(Thr). In Shewanella piezotolerans (strain WP3 / JCM 13877), this protein is Threonine--tRNA ligase.